A 430-amino-acid chain; its full sequence is Glutamate-1-semialdehyde 2,1-aminomutase (430 aa).

Lysine 265 bears the N6-(pyridoxal phosphate)lysine mark.

Belongs to the class-III pyridoxal-phosphate-dependent aminotransferase family. HemL subfamily. As to quaternary structure, homodimer. Requires pyridoxal 5'-phosphate as cofactor.

Its subcellular location is the cytoplasm. It catalyses the reaction (S)-4-amino-5-oxopentanoate = 5-aminolevulinate. It participates in porphyrin-containing compound metabolism; protoporphyrin-IX biosynthesis; 5-aminolevulinate from L-glutamyl-tRNA(Glu): step 2/2. The protein is Glutamate-1-semialdehyde 2,1-aminomutase of Shewanella sp. (strain ANA-3).